The primary structure comprises 144 residues: Large ribosomal subunit protein uL15 (144 aa).

The disordered stretch occupies residues 1–51; the sequence is MELNSIKPGSGSKHAKRRVGRGIGSGLGKTAGRGHKGQKSRAGGYHKVGFE. Residues 21 to 31 are compositionally biased toward gly residues; it reads RGIGSGLGKTA.

This sequence belongs to the universal ribosomal protein uL15 family. In terms of assembly, part of the 50S ribosomal subunit.

In terms of biological role, binds to the 23S rRNA. The polypeptide is Large ribosomal subunit protein uL15 (Leptothrix cholodnii (strain ATCC 51168 / LMG 8142 / SP-6) (Leptothrix discophora (strain SP-6))).